The primary structure comprises 227 residues: Cytochrome c oxidase subunit 2 (227 aa).

The Mitochondrial intermembrane segment spans residues 1-26 (MNTWMNFNLQNSNSPLMEQLMFFHNH). A helical transmembrane segment spans residues 27–48 (SMLIILLITILVGYIMSSLLYN). The Mitochondrial matrix segment spans residues 49 to 62 (KLYNRYLLESQNVE). Residues 63–82 (IIWTILPAFMLIFIALPSLR) traverse the membrane as a helical segment. The Mitochondrial intermembrane segment spans residues 83–227 (LLYLLDDSNS…SFIKWISSNS (145 aa)). Cu cation contacts are provided by His161, Cys196, Glu198, Cys200, His204, and Met207. Position 198 (Glu198) interacts with Mg(2+).

This sequence belongs to the cytochrome c oxidase subunit 2 family. As to quaternary structure, component of the cytochrome c oxidase (complex IV, CIV), a multisubunit enzyme composed of a catalytic core of 3 subunits and several supernumerary subunits. The complex exists as a monomer or a dimer and forms supercomplexes (SCs) in the inner mitochondrial membrane with ubiquinol-cytochrome c oxidoreductase (cytochrome b-c1 complex, complex III, CIII). It depends on Cu cation as a cofactor.

The protein localises to the mitochondrion inner membrane. It catalyses the reaction 4 Fe(II)-[cytochrome c] + O2 + 8 H(+)(in) = 4 Fe(III)-[cytochrome c] + 2 H2O + 4 H(+)(out). In terms of biological role, component of the cytochrome c oxidase, the last enzyme in the mitochondrial electron transport chain which drives oxidative phosphorylation. The respiratory chain contains 3 multisubunit complexes succinate dehydrogenase (complex II, CII), ubiquinol-cytochrome c oxidoreductase (cytochrome b-c1 complex, complex III, CIII) and cytochrome c oxidase (complex IV, CIV), that cooperate to transfer electrons derived from NADH and succinate to molecular oxygen, creating an electrochemical gradient over the inner membrane that drives transmembrane transport and the ATP synthase. Cytochrome c oxidase is the component of the respiratory chain that catalyzes the reduction of oxygen to water. Electrons originating from reduced cytochrome c in the intermembrane space (IMS) are transferred via the dinuclear copper A center (CU(A)) of subunit 2 and heme A of subunit 1 to the active site in subunit 1, a binuclear center (BNC) formed by heme A3 and copper B (CU(B)). The BNC reduces molecular oxygen to 2 water molecules using 4 electrons from cytochrome c in the IMS and 4 protons from the mitochondrial matrix. The protein is Cytochrome c oxidase subunit 2 (COII) of Ctenocephalides felis (Cat flea).